Consider the following 144-residue polypeptide: Transcriptional regulator SlyA (144 aa).

One can recognise an HTH marR-type domain in the interval 2–135; that stretch reads ESPLGSDLAR…LIKLIAKLEH (134 aa). Positions 49–72 form a DNA-binding region, H-T-H motif; it reads QIQLAKAIGIEQPSLVRTLDQLEE.

The protein belongs to the SlyA family. In terms of assembly, homodimer.

Transcription regulator that can specifically activate or repress expression of target genes. The polypeptide is Transcriptional regulator SlyA (Escherichia coli O127:H6 (strain E2348/69 / EPEC)).